Here is an 84-residue protein sequence, read N- to C-terminus: Cell division topological specificity factor (84 aa).

It belongs to the MinE family.

In terms of biological role, prevents the cell division inhibition by proteins MinC and MinD at internal division sites while permitting inhibition at polar sites. This ensures cell division at the proper site by restricting the formation of a division septum at the midpoint of the long axis of the cell. This Hydrogenovibrio crunogenus (strain DSM 25203 / XCL-2) (Thiomicrospira crunogena) protein is Cell division topological specificity factor.